The following is a 327-amino-acid chain: Aspartate--ammonia ligase (327 aa).

This sequence belongs to the class-II aminoacyl-tRNA synthetase family. AsnA subfamily.

It is found in the cytoplasm. It carries out the reaction L-aspartate + NH4(+) + ATP = L-asparagine + AMP + diphosphate + H(+). The protein operates within amino-acid biosynthesis; L-asparagine biosynthesis; L-asparagine from L-aspartate (ammonia route): step 1/1. The protein is Aspartate--ammonia ligase of Bacillus cereus (strain AH820).